The following is a 468-amino-acid chain: ATP synthase subunit beta (468 aa).

148–155 (GGAGVGKT) is an ATP binding site.

This sequence belongs to the ATPase alpha/beta chains family. F-type ATPases have 2 components, CF(1) - the catalytic core - and CF(0) - the membrane proton channel. CF(1) has five subunits: alpha(3), beta(3), gamma(1), delta(1), epsilon(1). CF(0) has three main subunits: a(1), b(2) and c(9-12). The alpha and beta chains form an alternating ring which encloses part of the gamma chain. CF(1) is attached to CF(0) by a central stalk formed by the gamma and epsilon chains, while a peripheral stalk is formed by the delta and b chains.

Its subcellular location is the cell inner membrane. It catalyses the reaction ATP + H2O + 4 H(+)(in) = ADP + phosphate + 5 H(+)(out). In terms of biological role, produces ATP from ADP in the presence of a proton gradient across the membrane. The catalytic sites are hosted primarily by the beta subunits. This chain is ATP synthase subunit beta, found in Xanthomonas campestris pv. campestris (strain 8004).